The chain runs to 179 residues: UPF0227 protein PM0825 (179 aa).

It belongs to the UPF0227 family.

The polypeptide is UPF0227 protein PM0825 (Pasteurella multocida (strain Pm70)).